The chain runs to 933 residues: MRMAATAWAGLQGPPLPTLCPAVRTGLYCRDQAHAERWAMTSETSSGSHCARSRMLRRRAQEEDSTVLIDVSPPEAEKRGSYGSTAHASEPGGQQAAACRAGSPAKPRIADFVLVWEEDLKLDRQQDSAARDRTDMHRTWRETFLDNLRAAGLCVDQQDVQDGNTTVHYALLSASWAVLCYYAEDLRLKLPLQELPNQASNWSAGLLAWLGIPNVLLEVVPDVPPEYYSCRFRVNKLPRFLGSDNQDTFFTSTKRHQILFEILAKTPYGHEKKNLLGIHQLLAEGVLSAAFPLHDGPFKTPPEGPQAPRLNQRQVLFQHWARWGKWNKYQPLDHVRRYFGEKVALYFAWLGFYTGWLLPAAVVGTLVFLVGCFLVFSDIPTQELCGSKDSFEMCPLCLDCPFWLLSSACALAQAGRLFDHGGTVFFSLFMALWAVLLLEYWKRKSATLAYRWDCSDYEDTEERPRPQFAASAPMTAPNPITGEDEPYFPERSRARRMLAGSVVIVVMVAVVVMCLVSIILYRAIMAIVVSRSGNTLLAAWASRIASLTGSVVNLVFILILSKIYVSLAHVLTRWEMHRTQTKFEDAFTLKVFIFQFVNFYSSPVYIAFFKGRFVGYPGNYHTLFGVRNEECAAGGCLIELAQELLVIMVGKQVINNMQEVLIPKLKGWWQKFRLRSKKRKAGASAGASQGPWEDDYELVPCEGLFDEYLEMVLQFGFVTIFVAACPLAPLFALLNNWVEIRLDARKFVCEYRRPVAERAQDIGIWFHILAGLTHLAVISNAFLLAFSSDFLPRAYYRWTRAHDLRGFLNFTLARAPSSFAAAHNRTCRYRAFRDDDGHYSQTYWNLLAIRLAFVIVFEHVVFSVGRLLDLLVPDIPESVEIKVKREYYLAKQALAENEVLFGTNGTKDEQPEGSELSSHWTPFTVPKASQLQQ.

At 1-355 the chain is on the cytoplasmic side; that stretch reads MRMAATAWAG…YFAWLGFYTG (355 aa). Residues 43–101 are disordered; that stretch reads ETSSGSHCARSRMLRRRAQEEDSTVLIDVSPPEAEKRGSYGSTAHASEPGGQQAAACRA. Residues 356 to 376 form a helical membrane-spanning segment; the sequence is WLLPAAVVGTLVFLVGCFLVF. The Extracellular segment spans residues 377-420; the sequence is SDIPTQELCGSKDSFEMCPLCLDCPFWLLSSACALAQAGRLFDH. Residues 421–441 form a helical membrane-spanning segment; the sequence is GGTVFFSLFMALWAVLLLEYW. Residues 442–499 are Cytoplasmic-facing; the sequence is KRKSATLAYRWDCSDYEDTEERPRPQFAASAPMTAPNPITGEDEPYFPERSRARRMLA. A helical membrane pass occupies residues 500–520; sequence GSVVIVVMVAVVVMCLVSIIL. Over 521–550 the chain is Extracellular; the sequence is YRAIMAIVVSRSGNTLLAAWASRIASLTGS. Residues 551 to 571 form a helical membrane-spanning segment; that stretch reads VVNLVFILILSKIYVSLAHVL. Residues 572–588 are Cytoplasmic-facing; it reads TRWEMHRTQTKFEDAFT. A helical membrane pass occupies residues 589 to 609; it reads LKVFIFQFVNFYSSPVYIAFF. Residues 610-714 are Extracellular-facing; it reads KGRFVGYPGN…FDEYLEMVLQ (105 aa). The chain crosses the membrane as a helical span at residues 715-735; the sequence is FGFVTIFVAACPLAPLFALLN. The Cytoplasmic segment spans residues 736–763; the sequence is NWVEIRLDARKFVCEYRRPVAERAQDIG. The helical transmembrane segment at 764–784 threads the bilayer; the sequence is IWFHILAGLTHLAVISNAFLL. Over 785–843 the chain is Extracellular; that stretch reads AFSSDFLPRAYYRWTRAHDLRGFLNFTLARAPSSFAAAHNRTCRYRAFRDDDGHYSQTY. Residues asparagine 809 and asparagine 824 are each glycosylated (N-linked (GlcNAc...) asparagine). The helical transmembrane segment at 844–864 threads the bilayer; it reads WNLLAIRLAFVIVFEHVVFSV. The Cytoplasmic segment spans residues 865-933; sequence GRLLDLLVPD…TVPKASQLQQ (69 aa). The segment at 902–933 is disordered; the sequence is GTNGTKDEQPEGSELSSHWTPFTVPKASQLQQ. Polar residues predominate over residues 915–933; sequence ELSSHWTPFTVPKASQLQQ.

Belongs to the anoctamin family. As to expression, specifically expressed in epithelial cells of the prostate (at protein level).

It is found in the cell membrane. The protein resides in the cell junction. It localises to the endoplasmic reticulum. Its subcellular location is the cytoplasm. The protein localises to the cytosol. The catalysed reaction is a 1,2-diacyl-sn-glycero-3-phospho-L-serine(in) = a 1,2-diacyl-sn-glycero-3-phospho-L-serine(out). The enzyme catalyses a beta-D-galactosyl-(1&lt;-&gt;1')-N-acylsphing-4-enine(out) = a beta-D-galactosyl-(1&lt;-&gt;1')-N-acylsphing-4-enine(in). It carries out the reaction a 1,2-diacyl-sn-glycero-3-phosphocholine(in) = a 1,2-diacyl-sn-glycero-3-phosphocholine(out). Has calcium-dependent phospholipid scramblase activity; scrambles phosphatidylserine, phosphatidylcholine and galactosylceramide. Does not exhibit calcium-activated chloride channel (CaCC) activity. May play a role in cell-cell interactions. This Homo sapiens (Human) protein is Anoctamin-7 (ANO7).